A 162-amino-acid chain; its full sequence is MRISKPHLRSVSIQCYLCLLLNSHFLTEAGIHVFILGCFSAGLPKTEANWVNVISDLKKIEDLIQSMHIDATLYTESDVHPSCKVTAMKCFLLELQVISHESGDTDIHDTVENLIILANNILSSNGNITESGCKECEELEEKNIKEFLQSFVHIVQMFINTS.

A signal peptide spans 1–29 (MRISKPHLRSVSIQCYLCLLLNSHFLTEA). The propeptide occupies 30-48 (GIHVFILGCFSAGLPKTEA). 2 disulfides stabilise this stretch: Cys83–Cys133 and Cys90–Cys136. The N-linked (GlcNAc...) asparagine glycan is linked to Asn127.

This sequence belongs to the IL-15/IL-21 family.

It localises to the secreted. In terms of biological role, cytokine that plays a major role in the development of inflammatory and protective immune responses to microbial invaders and parasites by modulating immune cells of both the innate and adaptive immune systems. Stimulates the proliferation of natural killer cells, T-cells and B-cells and promotes the secretion of several cytokines. In monocytes, induces the production of IL8 and monocyte chemotactic protein 1/CCL2, two chemokines that attract neutrophils and monocytes respectively to sites of infection. Unlike most cytokines, which are secreted in soluble form, IL15 is expressed in association with its high affinity IL15RA on the surface of IL15-producing cells and delivers signals to target cells that express IL2RB and IL2RG receptor subunits. Binding to its receptor triggers the phosphorylation of JAK1 and JAK3 and the recruitment and subsequent phosphorylation of signal transducer and activator of transcription-3/STAT3 and STAT5. In mast cells, induces the rapid tyrosine phosphorylation of STAT6 and thereby controls mast cell survival and release of cytokines such as IL4. The protein is Interleukin-15 (IL15) of Macaca mulatta (Rhesus macaque).